A 338-amino-acid polypeptide reads, in one-letter code: Phosphate acyltransferase (338 aa).

This sequence belongs to the PlsX family. Homodimer. Probably interacts with PlsY.

It localises to the cytoplasm. The catalysed reaction is a fatty acyl-[ACP] + phosphate = an acyl phosphate + holo-[ACP]. It participates in lipid metabolism; phospholipid metabolism. Catalyzes the reversible formation of acyl-phosphate (acyl-PO(4)) from acyl-[acyl-carrier-protein] (acyl-ACP). This enzyme utilizes acyl-ACP as fatty acyl donor, but not acyl-CoA. This is Phosphate acyltransferase from Alcanivorax borkumensis (strain ATCC 700651 / DSM 11573 / NCIMB 13689 / SK2).